Consider the following 300-residue polypeptide: Acetyl-coenzyme A carboxylase carboxyl transferase subunit beta 2 (300 aa).

In terms of domain architecture, CoA carboxyltransferase N-terminal spans valine 26–alanine 294. Zn(2+)-binding residues include cysteine 30, cysteine 33, cysteine 49, and cysteine 51. A C4-type zinc finger spans residues cysteine 30 to cysteine 51.

This sequence belongs to the AccD/PCCB family. In terms of assembly, acetyl-CoA carboxylase is a heterohexamer composed of biotin carboxyl carrier protein (AccB), biotin carboxylase (AccC) and two subunits each of ACCase subunit alpha (AccA) and ACCase subunit beta (AccD). Zn(2+) is required as a cofactor.

It localises to the cytoplasm. The catalysed reaction is N(6)-carboxybiotinyl-L-lysyl-[protein] + acetyl-CoA = N(6)-biotinyl-L-lysyl-[protein] + malonyl-CoA. It functions in the pathway lipid metabolism; malonyl-CoA biosynthesis; malonyl-CoA from acetyl-CoA: step 1/1. Functionally, component of the acetyl coenzyme A carboxylase (ACC) complex. Biotin carboxylase (BC) catalyzes the carboxylation of biotin on its carrier protein (BCCP) and then the CO(2) group is transferred by the transcarboxylase to acetyl-CoA to form malonyl-CoA. The sequence is that of Acetyl-coenzyme A carboxylase carboxyl transferase subunit beta 2 from Roseiflexus castenholzii (strain DSM 13941 / HLO8).